The chain runs to 329 residues: 4-hydroxythreonine-4-phosphate dehydrogenase (329 aa).

Residues His-136 and Thr-137 each contribute to the substrate site. A divalent metal cation-binding residues include His-166, His-211, and His-266. Residues Lys-274, Asn-283, and Arg-292 each coordinate substrate.

Belongs to the PdxA family. Homodimer. Zn(2+) serves as cofactor. Requires Mg(2+) as cofactor. It depends on Co(2+) as a cofactor.

The protein resides in the cytoplasm. The catalysed reaction is 4-(phosphooxy)-L-threonine + NAD(+) = 3-amino-2-oxopropyl phosphate + CO2 + NADH. The protein operates within cofactor biosynthesis; pyridoxine 5'-phosphate biosynthesis; pyridoxine 5'-phosphate from D-erythrose 4-phosphate: step 4/5. Catalyzes the NAD(P)-dependent oxidation of 4-(phosphooxy)-L-threonine (HTP) into 2-amino-3-oxo-4-(phosphooxy)butyric acid which spontaneously decarboxylates to form 3-amino-2-oxopropyl phosphate (AHAP). The polypeptide is 4-hydroxythreonine-4-phosphate dehydrogenase (Salmonella typhimurium (strain LT2 / SGSC1412 / ATCC 700720)).